The chain runs to 422 residues: Structural polyprotein (422 aa).

The Extracellular portion of the chain corresponds to 1–359; sequence SVTEHFNVYK…WPHEIIQYYY (359 aa). N-linked (GlcNAc...) asparagine; by host glycosylation is found at asparagine 200 and asparagine 262. The chain crosses the membrane as a helical span at residues 360-382; that stretch reads GLYPAATIAAVSGXSLMALLTLA. The Cytoplasmic portion of the chain corresponds to 383 to 422; it reads ATCCMLATARRKCLTPYALTPGAVVPLTLGLXXCAPRANA. 3 S-palmitoyl cysteine; by host lipidation sites follow: cysteine 385, cysteine 395, and cysteine 416. The interval 395–415 is transient transmembrane before p62-6K protein processing; that stretch reads CLTPYALTPGAVVPLTLGLXX.

Spike glycoprotein E2: Processing of the precursor of protein E3/E2 into E2 and E3 results in a heterodimer of the spike glycoproteins E2 and E1. Spike glycoprotein E2: Spike at virion surface are constituted of three E2-E1 heterodimers. Spike glycoprotein E2: Interacts with 6K protein. In terms of processing, structural polyprotein: Specific enzymatic cleavages in vivo yield mature proteins. Capsid protein is auto-cleaved during polyprotein translation, unmasking a signal peptide at the N-terminus of the precursor of E3/E2. The remaining polyprotein is then targeted to the host endoplasmic reticulum, where host signal peptidase cleaves it into pE2, 6K and E1 proteins. pE2 is further processed to mature E3 and E2 by host furin in trans-Golgi vesicle. Post-translationally, spike glycoprotein E2: Palmitoylated via thioester bonds. These palmitoylations may induce disruption of the C-terminus transmembrane. This would result in the reorientation of E2 C-terminus from lumenal to cytoplasmic side. Spike glycoprotein E2: N-glycosylated.

Its subcellular location is the virion membrane. The protein localises to the host cell membrane. Its function is as follows. Spike glycoprotein E2: Plays a role in viral attachment to target host cell, by binding to the cell receptor. Synthesized as a p62 precursor which is processed by furin at the cell membrane just before virion budding, giving rise to E2-E1 heterodimer. The p62-E1 heterodimer is stable, whereas E2-E1 is unstable and dissociate at low pH. p62 is processed at the last step, presumably to avoid E1 fusion activation before its final export to cell surface. E2 C-terminus contains a transitory transmembrane that would be disrupted by palmitoylation, resulting in reorientation of the C-terminal tail from lumenal to cytoplasmic side. This step is critical since E2 C-terminus is involved in budding by interacting with capsid proteins. This release of E2 C-terminus in cytoplasm occurs lately in protein export, and precludes premature assembly of particles at the endoplasmic reticulum membrane. The chain is Structural polyprotein from Ross river virus (strain 213970) (RRV).